A 683-amino-acid chain; its full sequence is DNA ligase (683 aa).

NAD(+) is bound by residues 36 to 40 (DAVYD), 85 to 86 (SL), and E121. K123 functions as the N6-AMP-lysine intermediate in the catalytic mechanism. The NAD(+) site is built by R144, E180, K296, and K320. Residues C413, C416, C431, and C437 each contribute to the Zn(2+) site. Residues 605–683 (PSEGHLSGKV…ESGWRVLAGL (79 aa)) form the BRCT domain.

The protein belongs to the NAD-dependent DNA ligase family. LigA subfamily. Requires Mg(2+) as cofactor. It depends on Mn(2+) as a cofactor.

The enzyme catalyses NAD(+) + (deoxyribonucleotide)n-3'-hydroxyl + 5'-phospho-(deoxyribonucleotide)m = (deoxyribonucleotide)n+m + AMP + beta-nicotinamide D-nucleotide.. DNA ligase that catalyzes the formation of phosphodiester linkages between 5'-phosphoryl and 3'-hydroxyl groups in double-stranded DNA using NAD as a coenzyme and as the energy source for the reaction. It is essential for DNA replication and repair of damaged DNA. The chain is DNA ligase from Gluconobacter oxydans (strain 621H) (Gluconobacter suboxydans).